An 857-amino-acid chain; its full sequence is Thiamine repressible genes regulatory protein thi5 (857 aa).

Residues 38-64 (CLSCRAKKIRCSGSEPCQACIATPSQC) constitute a DNA-binding region (zn(2)-C6 fungal-type). 2 disordered regions span residues 152 to 175 (AVKS…NFSS) and 797 to 819 (GHAL…HPSQ). A compositionally biased stretch (low complexity) spans 159-175 (SFPSSSTPPSSDSNFSS). Positions 803-819 (PESNNSSNSFKPSHPSQ) are enriched in polar residues.

It localises to the nucleus. In terms of biological role, transcription factor that activates the nmt1 promoter. Regulation of thiamine repressible genes. Negatively regulates conjugation during meiosis, by inducing negative regulators which delay conjugation. Involved in thi1 regulation. The sequence is that of Thiamine repressible genes regulatory protein thi5 (thi5) from Schizosaccharomyces pombe (strain 972 / ATCC 24843) (Fission yeast).